Reading from the N-terminus, the 200-residue chain is Glycerol-3-phosphate acyltransferase (200 aa).

The next 5 helical transmembrane spans lie at Met-1–Gly-21, Gly-53–Ala-73, Trp-81–Gly-101, Met-114–Ile-134, and Ile-139–Gly-159.

It belongs to the PlsY family. In terms of assembly, probably interacts with PlsX.

Its subcellular location is the cell inner membrane. The catalysed reaction is an acyl phosphate + sn-glycerol 3-phosphate = a 1-acyl-sn-glycero-3-phosphate + phosphate. The protein operates within lipid metabolism; phospholipid metabolism. Functionally, catalyzes the transfer of an acyl group from acyl-phosphate (acyl-PO(4)) to glycerol-3-phosphate (G3P) to form lysophosphatidic acid (LPA). This enzyme utilizes acyl-phosphate as fatty acyl donor, but not acyl-CoA or acyl-ACP. The polypeptide is Glycerol-3-phosphate acyltransferase (Synechococcus sp. (strain CC9902)).